The following is a 233-amino-acid chain: Biosynthetic peptidoglycan transglycosylase (233 aa).

The chain crosses the membrane as a helical span at residues Val7–Val27.

Belongs to the glycosyltransferase 51 family.

It localises to the cell inner membrane. It carries out the reaction [GlcNAc-(1-&gt;4)-Mur2Ac(oyl-L-Ala-gamma-D-Glu-L-Lys-D-Ala-D-Ala)](n)-di-trans,octa-cis-undecaprenyl diphosphate + beta-D-GlcNAc-(1-&gt;4)-Mur2Ac(oyl-L-Ala-gamma-D-Glu-L-Lys-D-Ala-D-Ala)-di-trans,octa-cis-undecaprenyl diphosphate = [GlcNAc-(1-&gt;4)-Mur2Ac(oyl-L-Ala-gamma-D-Glu-L-Lys-D-Ala-D-Ala)](n+1)-di-trans,octa-cis-undecaprenyl diphosphate + di-trans,octa-cis-undecaprenyl diphosphate + H(+). The protein operates within cell wall biogenesis; peptidoglycan biosynthesis. Its function is as follows. Peptidoglycan polymerase that catalyzes glycan chain elongation from lipid-linked precursors. In Shewanella oneidensis (strain ATCC 700550 / JCM 31522 / CIP 106686 / LMG 19005 / NCIMB 14063 / MR-1), this protein is Biosynthetic peptidoglycan transglycosylase.